The chain runs to 232 residues: H-2 class II histocompatibility antigen, E-S beta chain (232 aa).

The interval 1–90 is beta-1; sequence WFLEYSTSEC…LDKFLVPRRV (90 aa). Residues 1–193 lie on the Extracellular side of the membrane; that stretch reads WFLEYSTSEC…KAQSTSAQNK (193 aa). Cystine bridges form between C10–C74 and C112–C168. Residue N14 is glycosylated (N-linked (GlcNAc...) asparagine). Positions 91–193 are beta-2; sequence EPTVTVYPTK…KAQSTSAQNK (103 aa). Positions 92 to 182 constitute an Ig-like C1-type domain; the sequence is PTVTVYPTKT…PSLTDPVTVE (91 aa). Residues 194–216 form a helical membrane-spanning segment; it reads MLSGVGGFVLGLLFLGAGLFIYF. Residues 217-232 are Cytoplasmic-facing; the sequence is RNQKGQSGLQPTGLLS.

The protein belongs to the MHC class II family. In terms of processing, ubiquitinated in immature dendritic cells leading to down-regulation of MHC class II.

It localises to the membrane. The sequence is that of H-2 class II histocompatibility antigen, E-S beta chain (H2-Eb1) from Mus musculus (Mouse).